The following is a 194-amino-acid chain: uncharacterized protein (194 aa).

CBS domains follow at residues 13–72 and 78–133; these read MSFP…PKDV and MSKK…LLEI. The ACP-type MB domain maps to 159 to 192; that stretch reads YINGICENCGYQGRVRLYQGRYLCDECIEEFEEK. C164, C167, C182, and C185 together coordinate Fe cation. Zn(2+) contacts are provided by C164, C167, C182, and C185.

This is an uncharacterized protein from Methanocaldococcus jannaschii (strain ATCC 43067 / DSM 2661 / JAL-1 / JCM 10045 / NBRC 100440) (Methanococcus jannaschii).